Here is a 435-residue protein sequence, read N- to C-terminus: Glutamate-1-semialdehyde 2,1-aminomutase (435 aa).

K269 is subject to N6-(pyridoxal phosphate)lysine.

It belongs to the class-III pyridoxal-phosphate-dependent aminotransferase family. HemL subfamily. As to quaternary structure, homodimer. The cofactor is pyridoxal 5'-phosphate.

The protein localises to the cytoplasm. The catalysed reaction is (S)-4-amino-5-oxopentanoate = 5-aminolevulinate. Its pathway is porphyrin-containing compound metabolism; protoporphyrin-IX biosynthesis; 5-aminolevulinate from L-glutamyl-tRNA(Glu): step 2/2. The protein is Glutamate-1-semialdehyde 2,1-aminomutase of Gemmatimonas aurantiaca (strain DSM 14586 / JCM 11422 / NBRC 100505 / T-27).